We begin with the raw amino-acid sequence, 154 residues long: 3-hydroxyacyl-[acyl-carrier-protein] dehydratase FabZ (154 aa).

His-54 is an active-site residue.

This sequence belongs to the thioester dehydratase family. FabZ subfamily.

The protein resides in the cytoplasm. It carries out the reaction a (3R)-hydroxyacyl-[ACP] = a (2E)-enoyl-[ACP] + H2O. Its function is as follows. Involved in unsaturated fatty acids biosynthesis. Catalyzes the dehydration of short chain beta-hydroxyacyl-ACPs and long chain saturated and unsaturated beta-hydroxyacyl-ACPs. This is 3-hydroxyacyl-[acyl-carrier-protein] dehydratase FabZ from Shewanella sp. (strain MR-4).